Here is a 139-residue protein sequence, read N- to C-terminus: ATP synthase epsilon chain (139 aa).

A disordered region spans residues glutamate 89–arginine 110.

This sequence belongs to the ATPase epsilon chain family. As to quaternary structure, F-type ATPases have 2 components, CF(1) - the catalytic core - and CF(0) - the membrane proton channel. CF(1) has five subunits: alpha(3), beta(3), gamma(1), delta(1), epsilon(1). CF(0) has three main subunits: a, b and c.

The protein localises to the cell membrane. Produces ATP from ADP in the presence of a proton gradient across the membrane. The sequence is that of ATP synthase epsilon chain from Chloroflexus aurantiacus (strain ATCC 29366 / DSM 635 / J-10-fl).